We begin with the raw amino-acid sequence, 517 residues long: Crotonobetaine/carnitine--CoA ligase (517 aa).

It belongs to the ATP-dependent AMP-binding enzyme family.

It catalyses the reaction 4-(trimethylamino)butanoate + ATP + CoA = 4-(trimethylamino)butanoyl-CoA + AMP + diphosphate. The enzyme catalyses crotonobetaine + ATP + CoA = crotonobetainyl-CoA + AMP + diphosphate. The catalysed reaction is (R)-carnitine + ATP + CoA = (R)-carnitinyl-CoA + AMP + diphosphate. It participates in amine and polyamine metabolism; carnitine metabolism. In terms of biological role, catalyzes the transfer of CoA to carnitine, generating the initial carnitinyl-CoA needed for the CaiB reaction cycle. Also has activity toward crotonobetaine and gamma-butyrobetaine. This is Crotonobetaine/carnitine--CoA ligase from Shigella dysenteriae serotype 1 (strain Sd197).